The primary structure comprises 310 residues: MMKIVFMGTPEFAVPSLERLIKEFGVKAVFTQPDRPKGRGKKLSISPIKEVALRENIKILQPQKLRDDREAIEFLKKLSPDFIIVVAYGQILSKEILDIPKYGCINLHASLLPKYRGAAPINWAIINGEKFSGNTTMFMDVGLDTGDMLLKDEFKIEDNTTAGELHNKLMESGGELLVKTINGLVEDSIEPEKQKDEESCYASMLDKKMAKINWNLESEDIKNLIKGLNPWPLAYTYYKGTMMKIYEAEIIDKKEDFSPGFIIDVSKGGIKVATKDGILLLKKIQFPSKKPMYVEEYIRGNKIEKGIILE.

110-113 (SLLP) lines the (6S)-5,6,7,8-tetrahydrofolate pocket.

It belongs to the Fmt family.

It carries out the reaction L-methionyl-tRNA(fMet) + (6R)-10-formyltetrahydrofolate = N-formyl-L-methionyl-tRNA(fMet) + (6S)-5,6,7,8-tetrahydrofolate + H(+). Functionally, attaches a formyl group to the free amino group of methionyl-tRNA(fMet). The formyl group appears to play a dual role in the initiator identity of N-formylmethionyl-tRNA by promoting its recognition by IF2 and preventing the misappropriation of this tRNA by the elongation apparatus. The polypeptide is Methionyl-tRNA formyltransferase (Clostridium tetani (strain Massachusetts / E88)).